The chain runs to 275 residues: Vitamin B12-binding protein (275 aa).

Positions 1-27 (MKWIKSTGSIGLSLLLFLSSFSHSLYA) are cleaved as a signal peptide. Residues 31–275 (RVISLSPSTT…LCQQLNDNGS (245 aa)) enclose the Fe/B12 periplasmic-binding domain. Cyanocob(III)alamin is bound at residue tyrosine 58. A disulfide bond links cysteine 191 and cysteine 267.

It belongs to the BtuF family. In terms of assembly, the complex is composed of two ATP-binding proteins (BtuD), two transmembrane proteins (BtuC) and a solute-binding protein (BtuF).

It localises to the periplasm. Part of the ABC transporter complex BtuCDF involved in vitamin B12 import. Binds vitamin B12 and delivers it to the periplasmic surface of BtuC. This chain is Vitamin B12-binding protein, found in Photorhabdus laumondii subsp. laumondii (strain DSM 15139 / CIP 105565 / TT01) (Photorhabdus luminescens subsp. laumondii).